The chain runs to 82 residues: Small ribosomal subunit protein uS17c (82 aa).

It belongs to the universal ribosomal protein uS17 family. As to quaternary structure, part of the 30S ribosomal subunit.

The protein localises to the plastid. It localises to the chloroplast. Functionally, one of the primary rRNA binding proteins, it binds specifically to the 5'-end of 16S ribosomal RNA. The polypeptide is Small ribosomal subunit protein uS17c (rps17) (Cyanidioschyzon merolae (strain NIES-3377 / 10D) (Unicellular red alga)).